Consider the following 605-residue polypeptide: Tungsten-containing aldehyde ferredoxin oxidoreductase (605 aa).

The tungstopterin site is built by Arg-76, Asn-93, Gly-95, Arg-182, Ala-183, Gly-185, and Arg-186. Cys-288, Cys-291, and Cys-295 together coordinate [4Fe-4S] cluster. Tungstopterin contacts are provided by Asp-338, Leu-342, Asp-343, Arg-444, Lys-450, Asp-489, and Leu-493. Cys-494 contributes to the [4Fe-4S] cluster binding site. A tungstopterin-binding site is contributed by Leu-495.

It belongs to the AOR/FOR family. As to quaternary structure, monomer. Homodimer. [4Fe-4S] cluster is required as a cofactor. Requires tungstopterin as cofactor.

It carries out the reaction an aldehyde + 2 oxidized [2Fe-2S]-[ferredoxin] + H2O = a carboxylate + 2 reduced [2Fe-2S]-[ferredoxin] + 3 H(+). With respect to regulation, inhibited by arsenite, iodoacetate and cyanide. In terms of biological role, aldehyde ferredoxin oxidoreductase with a broad substrate specificity. Catalyzes the oxidation of a range of aliphatic aldehydes to their corresponding carboxylic acids. In vitro can use crotonaldehyde, acetaldehyde, formaldehyde, butyraldehyde or glyceraldehyde as substrate, using methyl viologen or ferredoxin, but not NAD(P), as the electron acceptor. Does not oxidize glucose or glyceraldehyde 3-phosphate. May be involved in a pyroglycolytic pathway. The sequence is that of Tungsten-containing aldehyde ferredoxin oxidoreductase from Pyrococcus furiosus (strain ATCC 43587 / DSM 3638 / JCM 8422 / Vc1).